A 251-amino-acid chain; its full sequence is Adenosylcobinamide-GDP ribazoletransferase (251 aa).

The next 7 membrane-spanning stretches (helical) occupy residues 36–56, 60–80, 110–130, 141–161, 181–201, 202–222, and 231–251; these read LYPFIGLIIGALWYLSFFVLS, VPIMLMAALILTVPYILTGFL, VGAFSVISVVLLLLVEFAGMF, VLIFIPIASRAINGYFIVSQE, EIILLGIYVLVALITFFTLGI, NYLIAILAMGLISFILLLKVK, and DVAGYILVLMEFTGILLLGII.

This sequence belongs to the CobS family. Mg(2+) serves as cofactor.

The protein localises to the cell membrane. It carries out the reaction alpha-ribazole + adenosylcob(III)inamide-GDP = adenosylcob(III)alamin + GMP + H(+). It catalyses the reaction alpha-ribazole 5'-phosphate + adenosylcob(III)inamide-GDP = adenosylcob(III)alamin 5'-phosphate + GMP + H(+). It participates in cofactor biosynthesis; adenosylcobalamin biosynthesis; adenosylcobalamin from cob(II)yrinate a,c-diamide: step 7/7. In terms of biological role, joins adenosylcobinamide-GDP and alpha-ribazole to generate adenosylcobalamin (Ado-cobalamin). Also synthesizes adenosylcobalamin 5'-phosphate from adenosylcobinamide-GDP and alpha-ribazole 5'-phosphate. The protein is Adenosylcobinamide-GDP ribazoletransferase of Clostridium perfringens (strain 13 / Type A).